The chain runs to 89 residues: MATSAAVKDEPATQFAKDQLKAIIERIERLEEEKKTISDDIRDVYAEAKGNGYDVKALRTIVRMRKQDADERAEQETILETYLQALGML.

This sequence belongs to the UPF0335 family.

In Rhodopseudomonas palustris (strain BisA53), this protein is UPF0335 protein RPE_4107.